The primary structure comprises 151 residues: MKYQQLENLECGWKWTYLMKKHQEGELITKYIENSAAHAAVDKLIELESEPVRVLKWIEQHMNPDLSNRMKQTIRARRKRHFNAEHQHTRKKSIDLDFPVWHRLSALSQRRGNTLSETIIQLIEDAERKEKYANQMSSLKHDLEAILGKKE.

The protein belongs to the MatP family. Homodimer.

It localises to the cytoplasm. Required for spatial organization of the terminus region of the chromosome (Ter macrodomain) during the cell cycle. Prevents early segregation of duplicated Ter macrodomains during cell division. Binds specifically to matS, which is a 13 bp signature motif repeated within the Ter macrodomain. This is Macrodomain Ter protein from Photorhabdus laumondii subsp. laumondii (strain DSM 15139 / CIP 105565 / TT01) (Photorhabdus luminescens subsp. laumondii).